Reading from the N-terminus, the 209-residue chain is Ribonuclease HII (209 aa).

Positions 6-209 constitute an RNase H type-2 domain; that stretch reads SLEAGIDEAG…IKRMTNSRLF (204 aa). A divalent metal cation is bound by residues aspartate 12, glutamate 13, and aspartate 108.

It belongs to the RNase HII family. Requires Mn(2+) as cofactor. Mg(2+) serves as cofactor.

It is found in the cytoplasm. The enzyme catalyses Endonucleolytic cleavage to 5'-phosphomonoester.. Functionally, endonuclease that specifically degrades the RNA of RNA-DNA hybrids. This Caldivirga maquilingensis (strain ATCC 700844 / DSM 13496 / JCM 10307 / IC-167) protein is Ribonuclease HII.